The chain runs to 389 residues: Putative cyclin-F3-1 (389 aa).

Positions 1 to 103 are disordered; the sequence is MEAAAAAAAE…GAAGGSRQPV (103 aa). Positions 19–43 are enriched in low complexity; it reads VEGAAVAAVAPEAAAEGPSEPNAGE.

Belongs to the cyclin family. Cyclin F subfamily.

In Oryza sativa subsp. japonica (Rice), this protein is Putative cyclin-F3-1 (CYCF3-1).